A 408-amino-acid chain; its full sequence is Zinc finger and SCAN domain-containing protein 1 (408 aa).

The tract at residues Met-1–Thr-34 is disordered. In terms of domain architecture, SCAN box spans Arg-38–Cys-120. Disordered regions lie at residues Trp-136–Gln-155, Leu-177–Ser-203, and Asp-215–Gln-273. The segment covering Leu-177–His-187 has biased composition (polar residues). 2 consecutive C2H2-type zinc fingers follow at residues Phe-292–His-314 and Phe-320–His-342. A disordered region spans residues Leu-344–Pro-379. A C2H2-type 3 zinc finger spans residues Phe-380–His-402.

It is found in the nucleus. May be involved in transcriptional regulation. The protein is Zinc finger and SCAN domain-containing protein 1 (ZSCAN1) of Homo sapiens (Human).